Reading from the N-terminus, the 147-residue chain is Large ribosomal subunit protein uL15 (147 aa).

A disordered region spans residues 1–57 (MKLHELKSAPKSRNHKAKVVGRGHGSGLGKTSGRGQKGQKARKSGRTRPGFEGGQTP). Residues 10-21 (PKSRNHKAKVVG) are compositionally biased toward basic residues. Gly residues predominate over residues 22–36 (RGHGSGLGKTSGRGQ). Basic residues predominate over residues 37–46 (KGQKARKSGR).

Belongs to the universal ribosomal protein uL15 family. As to quaternary structure, part of the 50S ribosomal subunit.

Functionally, binds to the 23S rRNA. In Mycoplasmoides gallisepticum (strain R(low / passage 15 / clone 2)) (Mycoplasma gallisepticum), this protein is Large ribosomal subunit protein uL15.